A 150-amino-acid polypeptide reads, in one-letter code: Protein NrdI (150 aa).

Belongs to the NrdI family.

Its function is as follows. Probably involved in ribonucleotide reductase function. This chain is Protein NrdI, found in Mycobacterium avium (strain 104).